Reading from the N-terminus, the 506-residue chain is 2,3-bisphosphoglycerate-independent phosphoglycerate mutase (506 aa).

Mn(2+) is bound by residues aspartate 13 and serine 63. Serine 63 acts as the Phosphoserine intermediate in catalysis. Residues histidine 124, 153-154 (RD), arginine 183, arginine 189, 254-257 (RADR), and lysine 330 contribute to the substrate site. The Mn(2+) site is built by aspartate 396, histidine 400, aspartate 437, histidine 438, and histidine 456.

It belongs to the BPG-independent phosphoglycerate mutase family. Monomer. Requires Mn(2+) as cofactor.

It carries out the reaction (2R)-2-phosphoglycerate = (2R)-3-phosphoglycerate. The protein operates within carbohydrate degradation; glycolysis; pyruvate from D-glyceraldehyde 3-phosphate: step 3/5. Its function is as follows. Catalyzes the interconversion of 2-phosphoglycerate and 3-phosphoglycerate. This Cereibacter sphaeroides (strain KD131 / KCTC 12085) (Rhodobacter sphaeroides) protein is 2,3-bisphosphoglycerate-independent phosphoglycerate mutase.